A 120-amino-acid chain; its full sequence is Seripauperin-10 (120 aa).

Residues 1–20 form the signal peptide; it reads MVKLTSIAAGVAAIAATASA.

The protein belongs to the SRP1/TIP1 family. Seripauperin subfamily.

This chain is Seripauperin-10 (PAU10), found in Saccharomyces cerevisiae (strain ATCC 204508 / S288c) (Baker's yeast).